The chain runs to 337 residues: S-adenosylmethionine:tRNA ribosyltransferase-isomerase (337 aa).

It belongs to the QueA family. Monomer.

It localises to the cytoplasm. It catalyses the reaction 7-aminomethyl-7-carbaguanosine(34) in tRNA + S-adenosyl-L-methionine = epoxyqueuosine(34) in tRNA + adenine + L-methionine + 2 H(+). It functions in the pathway tRNA modification; tRNA-queuosine biosynthesis. Functionally, transfers and isomerizes the ribose moiety from AdoMet to the 7-aminomethyl group of 7-deazaguanine (preQ1-tRNA) to give epoxyqueuosine (oQ-tRNA). This Legionella pneumophila (strain Corby) protein is S-adenosylmethionine:tRNA ribosyltransferase-isomerase.